The sequence spans 796 residues: Cadherin-11 (796 aa).

A signal peptide spans Met-1–Ala-24. The propeptide occupies Leu-25–Arg-53. Cadherin domains lie at Gly-54–Phe-159, Leu-160–Phe-268, Pro-269–Phe-383, Leu-384–Pro-486, and Lys-487–Asn-612. Over Gly-54 to Thr-617 the chain is Extracellular. 2 N-linked (GlcNAc...) asparagine glycosylation sites follow: Asn-455 and Asn-540. A helical transmembrane segment spans residues Gly-618–Leu-640. Residues Arg-641–Ser-796 are Cytoplasmic-facing. Ser-788 carries the post-translational modification Phosphoserine. Thr-791 carries the post-translational modification Phosphothreonine.

In terms of assembly, interacts with PCDH8. As to expression, selectively expressed in osteoblastic cell lines, precursor cell lines of osteoblasts, and primary osteoblastic cells from calvaria, as well as in lung, testis, and brain tissues at low levels.

It localises to the cell membrane. In terms of biological role, cadherins are calcium-dependent cell adhesion proteins. They preferentially interact with themselves in a homophilic manner in connecting cells; cadherins may thus contribute to the sorting of heterogeneous cell types. Required for proper focal adhesion assembly. Involved in the regulation of cell migration. The sequence is that of Cadherin-11 (Cdh11) from Mus musculus (Mouse).